The chain runs to 294 residues: tRNA dimethylallyltransferase (294 aa).

An ATP-binding site is contributed by 10–17 (GPTAVGKT). 12–17 (TAVGKT) provides a ligand contact to substrate. The interval 35–38 (DSQQ) is interaction with substrate tRNA.

This sequence belongs to the IPP transferase family. Monomer. Mg(2+) is required as a cofactor.

The catalysed reaction is adenosine(37) in tRNA + dimethylallyl diphosphate = N(6)-dimethylallyladenosine(37) in tRNA + diphosphate. Its function is as follows. Catalyzes the transfer of a dimethylallyl group onto the adenine at position 37 in tRNAs that read codons beginning with uridine, leading to the formation of N6-(dimethylallyl)adenosine (i(6)A). This is tRNA dimethylallyltransferase from Streptococcus pneumoniae (strain ATCC 700669 / Spain 23F-1).